A 146-amino-acid chain; its full sequence is Hemoglobin subunit beta-1/2 (146 aa).

Val1 bears the N-acetylvaline mark. The Globin domain maps to 2–146 (HLTPDEKNAV…VATALAHKYH (145 aa)). Ser44 carries the phosphoserine modification. Position 59 is an N6-acetyllysine (Lys59). His63 and His92 together coordinate heme b. Cys93 carries the post-translational modification S-nitrosocysteine. Lys144 carries the post-translational modification N6-acetyllysine.

The protein belongs to the globin family. Heterotetramer of two alpha chains and two beta chains. As to expression, red blood cells.

In terms of biological role, involved in oxygen transport from the lung to the various peripheral tissues. In Otolemur crassicaudatus (Brown greater galago), this protein is Hemoglobin subunit beta-1/2 (HBB).